The sequence spans 121 residues: Secretin (121 aa).

The first 18 residues, 1–18 (MAPRPLLLLLLLLGGSAA), serve as a signal peptide directing secretion. Residues 19–26 (RPAPPRAR) constitute a propeptide that is removed on maturation. Residue Val-54 is modified to Valine amide. Ser-58 carries the phosphoserine modification. The propeptide occupies 58–121 (SEQDAENSMA…AAAEGTLRPR (64 aa)).

This sequence belongs to the glucagon family.

It is found in the secreted. In terms of biological role, hormone involved in different processes, such as regulation of the pH of the duodenal content, food intake and water homeostasis. Exerts its biological effects by binding to secretin receptor (SCTR), a G-protein coupled receptor expressed in the basolateral domain of several cells. Acts as a key gastrointestinal hormone by regulating the pH of the duodenal content. Secreted by S cells of the duodenum in the crypts of Lieberkuehn and regulates the pH of the duodenum by (1) inhibiting the secretion of gastric acid from the parietal cells of the stomach and (2) stimulating the production of bicarbonate (NaHCO(3)) from the ductal cells of the pancreas. Production of bicarbonate is essential to neutralize the pH and ensure no damage is done to the small intestine by the gastric acid. In addition to regulating the pH of the duodenal content, plays a central role in diet induced thermogenesis: acts as a non-sympathetic brown fat (BAT) activator mediating prandial thermogenesis, which consequentially induces satiation. Mechanistically, secretin released by the gut after a meal binds to secretin receptor (SCTR) in brown adipocytes, activating brown fat thermogenesis by stimulating lipolysis, which is sensed in the brain and promotes satiation. Also able to stimulate lipolysis in white adipocytes. Also plays an important role in cellular osmoregulation: released into the systemic circulation in response to hyperosmolality and acts at different levels in the hypothalamus, pituitary and kidney to regulate water homeostasis. Also plays a role in the central nervous system, possibly by acting as a neuropeptide hormone: required for hippocampal synaptic function and neural progenitor cells maintenance. The sequence is that of Secretin from Homo sapiens (Human).